A 216-amino-acid chain; its full sequence is Thiamine-phosphate synthase (216 aa).

Residues 39–43 (QLRRK) and asparagine 71 contribute to the 4-amino-2-methyl-5-(diphosphooxymethyl)pyrimidine site. The Mg(2+) site is built by aspartate 72 and aspartate 91. Serine 109 contacts 4-amino-2-methyl-5-(diphosphooxymethyl)pyrimidine. Position 136-138 (136-138 (SPT)) interacts with 2-[(2R,5Z)-2-carboxy-4-methylthiazol-5(2H)-ylidene]ethyl phosphate. Residue lysine 139 participates in 4-amino-2-methyl-5-(diphosphooxymethyl)pyrimidine binding. Residues glycine 172 and 192 to 193 (IT) contribute to the 2-[(2R,5Z)-2-carboxy-4-methylthiazol-5(2H)-ylidene]ethyl phosphate site.

The protein belongs to the thiamine-phosphate synthase family. The cofactor is Mg(2+).

The catalysed reaction is 2-[(2R,5Z)-2-carboxy-4-methylthiazol-5(2H)-ylidene]ethyl phosphate + 4-amino-2-methyl-5-(diphosphooxymethyl)pyrimidine + 2 H(+) = thiamine phosphate + CO2 + diphosphate. It catalyses the reaction 2-(2-carboxy-4-methylthiazol-5-yl)ethyl phosphate + 4-amino-2-methyl-5-(diphosphooxymethyl)pyrimidine + 2 H(+) = thiamine phosphate + CO2 + diphosphate. The enzyme catalyses 4-methyl-5-(2-phosphooxyethyl)-thiazole + 4-amino-2-methyl-5-(diphosphooxymethyl)pyrimidine + H(+) = thiamine phosphate + diphosphate. It functions in the pathway cofactor biosynthesis; thiamine diphosphate biosynthesis; thiamine phosphate from 4-amino-2-methyl-5-diphosphomethylpyrimidine and 4-methyl-5-(2-phosphoethyl)-thiazole: step 1/1. In terms of biological role, condenses 4-methyl-5-(beta-hydroxyethyl)thiazole monophosphate (THZ-P) and 2-methyl-4-amino-5-hydroxymethyl pyrimidine pyrophosphate (HMP-PP) to form thiamine monophosphate (TMP). This chain is Thiamine-phosphate synthase, found in Bordetella avium (strain 197N).